A 76-amino-acid chain; its full sequence is MLFESISTLSNLKSASKSSMIASTGSTSSKSSNSIQCYTGCVGGGIFPIRQTSINIDINISISRGCGSCGGCACRY.

The span at 1–13 (MLFESISTLSNLK) shows a compositional bias: polar residues. The disordered stretch occupies residues 1-33 (MLFESISTLSNLKSASKSSMIASTGSTSSKSSN). Over residues 14–33 (SASKSSMIASTGSTSSKSSN) the composition is skewed to low complexity.

In Dictyostelium discoideum (Social amoeba), this protein is Protein sigN132.